The following is a 477-amino-acid chain: Cysteine--tRNA ligase (477 aa).

A Zn(2+)-binding site is contributed by Cys28. Positions 30–40 (PTVYDYAHIGN) match the 'HIGH' region motif. Zn(2+) is bound by residues Cys213, His238, and Glu242. The short motif at 270–274 (KMSKS) is the 'KMSKS' region element. Lys273 contributes to the ATP binding site.

It belongs to the class-I aminoacyl-tRNA synthetase family. Monomer. The cofactor is Zn(2+).

It localises to the cytoplasm. The enzyme catalyses tRNA(Cys) + L-cysteine + ATP = L-cysteinyl-tRNA(Cys) + AMP + diphosphate. The protein is Cysteine--tRNA ligase of Chlamydia trachomatis serovar A (strain ATCC VR-571B / DSM 19440 / HAR-13).